Consider the following 175-residue polypeptide: Co-chaperone protein HscB homolog (175 aa).

A J domain is found at 7-79; sequence SHFDLFHLPA…LQRASYLLSL (73 aa).

This sequence belongs to the HscB family. As to quaternary structure, interacts with HscA and stimulates its ATPase activity.

In terms of biological role, co-chaperone involved in the maturation of iron-sulfur cluster-containing proteins. Seems to help targeting proteins to be folded toward HscA. The polypeptide is Co-chaperone protein HscB homolog (Burkholderia vietnamiensis (strain G4 / LMG 22486) (Burkholderia cepacia (strain R1808))).